A 514-amino-acid polypeptide reads, in one-letter code: Butyrophilin subfamily 2 member A2 (514 aa).

The N-terminal stretch at 1–29 (MEPTTSLRSCPIASLLFFLVLSLFVLVSA) is a signal peptide. The region spanning 30–142 (QFTVIGPAEP…SYDQATMKLM (113 aa)) is the Ig-like V-type domain. The Extracellular portion of the chain corresponds to 30-244 (QFTVIGPAEP…ILIPESFVPS (215 aa)). Asn47 and Asn115 each carry an N-linked (GlcNAc...) asparagine glycan. 2 disulfides stabilise this stretch: Cys52–Cys126 and Cys166–Cys220. One can recognise an Ig-like C2-type domain in the interval 150–232 (PLIKMKTLED…NNTLLSQEVE (83 aa)). A helical transmembrane segment spans residues 245-265 (LPLWMVAVAVTLPVVMLILLT). Residues 266–514 (SGSICLVKKH…PISQSLVRKP (249 aa)) lie on the Cytoplasmic side of the membrane. A coiled-coil region spans residues 281-304 (ILSAEKEAEYEEKEAARQLQEELR). A B30.2/SPRY domain is found at 295–488 (AARQLQEELR…LFICPAFTGA (194 aa)).

It belongs to the immunoglobulin superfamily. BTN/MOG family. Post-translationally, N-glycosylated. As to expression, widely expressed (at protein level). In the thymus, restricted to the corticomedullary junction, but not confined solely to epithelial cells (at protein level). Significant expression on naive B-cells, splenic natural killer cells, dendritic cells and peritoneal macrophages (at protein level). Negligible expression on naive T-cells up-regulated on activated T-cells (at protein level).

The protein resides in the membrane. Functionally, inhibits the proliferation of CD4 and CD8 T-cells activated by anti-CD3 antibodies, T-cell metabolism and IL2 and IFNG secretion. The chain is Butyrophilin subfamily 2 member A2 (Btn2a2) from Mus musculus (Mouse).